Reading from the N-terminus, the 163-residue chain is Phosphopantetheine adenylyltransferase (163 aa).

Thr11 serves as a coordination point for substrate. ATP-binding positions include 11–12 and His19; that span reads TF. Residues Lys43, Leu75, and Arg89 each coordinate substrate. Residues 90-92, Glu100, and 125-131 each bind ATP; these read GLR and YSFISST.

Belongs to the bacterial CoaD family. As to quaternary structure, homohexamer. Mg(2+) is required as a cofactor.

Its subcellular location is the cytoplasm. The enzyme catalyses (R)-4'-phosphopantetheine + ATP + H(+) = 3'-dephospho-CoA + diphosphate. Its pathway is cofactor biosynthesis; coenzyme A biosynthesis; CoA from (R)-pantothenate: step 4/5. Functionally, reversibly transfers an adenylyl group from ATP to 4'-phosphopantetheine, yielding dephospho-CoA (dPCoA) and pyrophosphate. This is Phosphopantetheine adenylyltransferase from Acinetobacter baumannii (strain ACICU).